Here is a 138-residue protein sequence, read N- to C-terminus: Acidic phospholipase A2 PePLA2 (138 aa).

Residues 1–16 (MRTLWIMAVLLLGVEG) form the signal peptide. Intrachain disulfides connect Cys-42–Cys-131, Cys-44–Cys-60, Cys-59–Cys-110, Cys-65–Cys-138, Cys-66–Cys-103, Cys-73–Cys-97, and Cys-91–Cys-101. The Ca(2+) site is built by Tyr-43, Gly-45, and Gly-47. His-63 is a catalytic residue. Asp-64 serves as a coordination point for Ca(2+). Asp-104 is an active-site residue.

This sequence belongs to the phospholipase A2 family. Group II subfamily. D49 sub-subfamily. Ca(2+) is required as a cofactor. Expressed by the venom gland.

It localises to the secreted. It carries out the reaction a 1,2-diacyl-sn-glycero-3-phosphocholine + H2O = a 1-acyl-sn-glycero-3-phosphocholine + a fatty acid + H(+). PLA2 catalyzes the calcium-dependent hydrolysis of the 2-acyl groups in 3-sn-phosphoglycerides. The sequence is that of Acidic phospholipase A2 PePLA2 from Protobothrops elegans (Elegant pitviper).